The following is a 320-amino-acid chain: ADP/ATP translocase 4 (320 aa).

The Mitochondrial intermembrane portion of the chain corresponds to 1 to 20; the sequence is MSNESSKKQSSKKALFDPVS. One copy of the Solcar 1 repeat lies at 19–111; it reads VSFSKDLLAG…FAFKDKYKEL (93 aa). The chain crosses the membrane as a helical span at residues 21–50; the sequence is FSKDLLAGGVAAAVSKTAVAPIERVKLLLQ. At 51 to 87 the chain is on the mitochondrial matrix side; sequence VQASSKQISPEARYKGMLDCLVRIPREQGFLSYWRGN. A helical membrane pass occupies residues 88-112; that stretch reads LANVIRYFPTQALNFAFKDKYKELF. 2 residues coordinate ADP: R93 and K105. Over 113 to 122 the chain is Mitochondrial intermembrane; sequence MSGVNKEKQF. A helical membrane pass occupies residues 123-143; it reads WRWFLANLASGGAAGATSLCV. 2 Solcar repeats span residues 124–214 and 221–308; these read RWFL…VKGL and TPFL…IKEF. At 144–191 the chain is on the mitochondrial matrix side; the sequence is VYPLDFARTRLGVDIGKGPEQRQFTGLGDCIMKIAKSDGLIGLYQGFG. The helical transmembrane segment at 192–212 threads the bilayer; sequence VSVQGIIVYRASYFGAYDTVK. At 213–223 the chain is on the mitochondrial intermembrane side; it reads GLLPKPKETPF. A helical membrane pass occupies residues 224-244; the sequence is LVSFIIAQIVTTCSGILSYPF. At 245 to 284 the chain is on the mitochondrial matrix side; sequence DTVRRRMMMQSGESDRQYKGTIDCFLKIYRHEGVPAFFRG. ADP is bound at residue R248. The tract at residues 248 to 253 is important for transport activity; the sequence is RRRMMM. Positions 248-253 match the Nucleotide carrier signature motif motif; sequence RRRMMM. The helical transmembrane segment at 285–302 threads the bilayer; the sequence is AFSNILRGTGGALVLVLY. The Mitochondrial intermembrane segment spans residues 303–320; it reads DKIKEFLNIDVGGSSSGD.

This sequence belongs to the mitochondrial carrier (TC 2.A.29) family. As to quaternary structure, monomer. Specifically expressed in undifferentiated embryonic stem cells and germ cells. Expression is down-regulated after embryonic stem cells differentiation. In adults, only expressed in developing gametes in testis. In testis, expressed at higher level in spermatocytes. Expression is probably associated with entry of the male germ cells into meiosis. Expressed at very low level in Sertoli cells.

Its subcellular location is the mitochondrion inner membrane. The protein resides in the membrane. The protein localises to the cell projection. It localises to the cilium. It is found in the flagellum membrane. The enzyme catalyses ADP(in) + ATP(out) = ADP(out) + ATP(in). It catalyses the reaction dATP(out) + ADP(in) = dATP(in) + ADP(out). It carries out the reaction dADP(in) + ADP(out) = dADP(out) + ADP(in). The catalysed reaction is H(+)(in) = H(+)(out). Its activity is regulated as follows. The matrix-open state (m-state) is inhibited by the membrane-permeable bongkrekic acid (BKA). The cytoplasmic-open state (c-state) is inhibited by the membrane-impermeable toxic inhibitor carboxyatractyloside (CATR). Proton transporter activity is inhibited by ADP:ATP antiporter activity. Functionally, ADP:ATP antiporter that mediates import of ADP into the mitochondrial matrix for ATP synthesis, and export of ATP out to fuel the cell. Cycles between the cytoplasmic-open state (c-state) and the matrix-open state (m-state): operates by the alternating access mechanism with a single substrate-binding site intermittently exposed to either the cytosolic (c-state) or matrix (m-state) side of the inner mitochondrial membrane. Specifically required during spermatogenesis, probably to mediate ADP:ATP exchange in spermatocytes. Large ATP supplies from mitochondria may be critical for normal progression of spermatogenesis during early stages of meiotic prophase I, including DNA double-strand break repair and chromosomal synapsis. In addition to its ADP:ATP antiporter activity, also involved in mitochondrial uncoupling and mitochondrial permeability transition pore (mPTP) activity. Plays a role in mitochondrial uncoupling by acting as a proton transporter: proton transport uncouples the proton flows via the electron transport chain and ATP synthase to reduce the efficiency of ATP production and cause mitochondrial thermogenesis. Proton transporter activity is inhibited by ADP:ATP antiporter activity, suggesting that SLC25A31/ANT4 acts as a master regulator of mitochondrial energy output by maintaining a delicate balance between ATP production (ADP:ATP antiporter activity) and thermogenesis (proton transporter activity). Proton transporter activity requires free fatty acids as cofactor, but does not transport it. Among nucleotides, may also exchange ADP for dATP and dADP. Also plays a key role in mPTP opening, a non-specific pore that enables free passage of the mitochondrial membranes to solutes of up to 1.5 kDa, and which contributes to cell death. It is however unclear if SLC25A31/ANT4 constitutes a pore-forming component of mPTP or regulates it. The polypeptide is ADP/ATP translocase 4 (Mus musculus (Mouse)).